Reading from the N-terminus, the 467-residue chain is MTRVLSVASECVPLVKTGGLADVAGALPAALAGQGVGMRVLLPGYPAVLGAAAKTPVLREIPDLFGGPARIRRGALGKAVLYILDAPHLFDRPGGIYLGPDGRDWPDNPQRFAALCKAAALIAAEGVEDWRPQVLHLHDWQAGLTPIYLRQAGVRDVRTLLTIHNIAFQGLAPAHMLSALQLPAHLFNPSGFEYWGRISALKAGIVFADKVSTVSPTYAEELMTPEFGMGMEGVLADRAGDFTGILNGIDLDAWKPPYATPQGKAPHRAALRKEFGLPETDGPLCVVVSRLTGQKGLDLLIEALPALLENGGQLAVLGSGDPGLEAAFAKAAARHAGVALRLGYDEALSRRMIAGGDAILVPSRFEPCGLTQLYGLRFGTLPLVALTGGLADTVINASVAGLAAGVATGVQFHPVDARTLSRALTRLCALWHQPAAWQRMMDNAMAHPVGWDASARAYAELFEAMAA.

Position 16 (Lys-16) interacts with ADP-alpha-D-glucose.

It belongs to the glycosyltransferase 1 family. Bacterial/plant glycogen synthase subfamily.

The catalysed reaction is [(1-&gt;4)-alpha-D-glucosyl](n) + ADP-alpha-D-glucose = [(1-&gt;4)-alpha-D-glucosyl](n+1) + ADP + H(+). It participates in glycan biosynthesis; glycogen biosynthesis. Synthesizes alpha-1,4-glucan chains using ADP-glucose. This is Glycogen synthase from Paracoccus denitrificans (strain Pd 1222).